We begin with the raw amino-acid sequence, 213 residues long: uncharacterized protein (213 aa).

S-adenosyl-L-methionine contacts are provided by Gly53, Glu74, and Asp97.

The protein belongs to the methyltransferase superfamily. YrrT family.

Its function is as follows. Could be a S-adenosyl-L-methionine-dependent methyltransferase. This is an uncharacterized protein from Bacillus subtilis (strain 168).